The following is a 261-amino-acid chain: Ribonuclease PH (261 aa).

Residues Arg87 and 125–127 (GTR) contribute to the phosphate site.

This sequence belongs to the RNase PH family. Homohexameric ring arranged as a trimer of dimers.

The enzyme catalyses tRNA(n+1) + phosphate = tRNA(n) + a ribonucleoside 5'-diphosphate. Phosphorolytic 3'-5' exoribonuclease that plays an important role in tRNA 3'-end maturation. Removes nucleotide residues following the 3'-CCA terminus of tRNAs; can also add nucleotides to the ends of RNA molecules by using nucleoside diphosphates as substrates, but this may not be physiologically important. Probably plays a role in initiation of 16S rRNA degradation (leading to ribosome degradation) during starvation. In Caldanaerobacter subterraneus subsp. tengcongensis (strain DSM 15242 / JCM 11007 / NBRC 100824 / MB4) (Thermoanaerobacter tengcongensis), this protein is Ribonuclease PH.